The following is a 394-amino-acid chain: Phosphopentomutase (394 aa).

Mn(2+)-binding residues include aspartate 13, aspartate 286, histidine 291, aspartate 327, histidine 328, and histidine 339.

This sequence belongs to the phosphopentomutase family. Mn(2+) is required as a cofactor.

Its subcellular location is the cytoplasm. The enzyme catalyses 2-deoxy-alpha-D-ribose 1-phosphate = 2-deoxy-D-ribose 5-phosphate. The catalysed reaction is alpha-D-ribose 1-phosphate = D-ribose 5-phosphate. It functions in the pathway carbohydrate degradation; 2-deoxy-D-ribose 1-phosphate degradation; D-glyceraldehyde 3-phosphate and acetaldehyde from 2-deoxy-alpha-D-ribose 1-phosphate: step 1/2. In terms of biological role, isomerase that catalyzes the conversion of deoxy-ribose 1-phosphate (dRib-1-P) and ribose 1-phosphate (Rib-1-P) to deoxy-ribose 5-phosphate (dRib-5-P) and ribose 5-phosphate (Rib-5-P), respectively. The chain is Phosphopentomutase from Bacillus cereus (strain AH187).